A 416-amino-acid polypeptide reads, in one-letter code: MKADVIVGIQWGDEGKGKIVDMLAQKYDMVCRSQGGHNAGHTIWVDGVRYALQLIPSGILNPKAVNVIGNGVVVSPLNIIKEMSQFSSLEGRLFISDKAHLNLPFHALIDQAKERLKGDKAIGTTGKGIGPTYAEKVSRTGFRMGELLNPIKLCDDILEYFKQNRSIFDVLDISTPNKDELLAELNEYKEKLSPFITNTTNLVWKAIDENKRILLEGAQGTMLDIDHGTYPYVTSSSTVSAGSCTGLGINPKDIGVITGIVKAYCTRVGNGPFPTEDFTEAGKTIGEVGKEFGTVTGRKRRCGWFDAVAVRYASRLNGCDQLALMKLDVLDGFSKIKVCVAYELDGERIDYMPSDMQNVKPIYEEIDGWDSVVGIQDFDKLPVNAKKYIEKIEEITSVKVGIISTSPERADTIIRG.

GTP contacts are provided by residues 12–18 and 40–42; these read GDEGKGK and GHT. The Proton acceptor role is filled by Asp13. Mg(2+) contacts are provided by Asp13 and Gly40. Residues 13-16, 38-41, Thr125, Arg139, Gln219, Thr234, and Arg298 each bind IMP; these read DEGK and NAGH. His41 functions as the Proton donor in the catalytic mechanism. Substrate is bound at residue 294–300; the sequence is TVTGRKR. Residues Arg300, 326-328, and 404-406 each bind GTP; these read KLD and STS.

Belongs to the adenylosuccinate synthetase family. Homodimer. The cofactor is Mg(2+).

It is found in the cytoplasm. It carries out the reaction IMP + L-aspartate + GTP = N(6)-(1,2-dicarboxyethyl)-AMP + GDP + phosphate + 2 H(+). It participates in purine metabolism; AMP biosynthesis via de novo pathway; AMP from IMP: step 1/2. Its function is as follows. Plays an important role in the de novo pathway of purine nucleotide biosynthesis. Catalyzes the first committed step in the biosynthesis of AMP from IMP. This is Adenylosuccinate synthetase from Aliarcobacter butzleri (strain RM4018) (Arcobacter butzleri).